A 433-amino-acid polypeptide reads, in one-letter code: ACT domain-containing protein ACR6 (433 aa).

4 consecutive ACT domains span residues 30–110 (VIQV…RSSV), 120–207 (SIEL…SCSD), 250–326 (VVTM…ASEG), and 328–402 (ELEL…VKKK).

Functionally, may bind amino acids. In Arabidopsis thaliana (Mouse-ear cress), this protein is ACT domain-containing protein ACR6.